Reading from the N-terminus, the 346-residue chain is 26S proteasome non-ATPase regulatory subunit 4 (346 aa).

In terms of domain architecture, VWFA spans Ser-5–Val-190. UIM domains are found at residues Glu-216–Arg-235 and Thr-273–Ala-292. The disordered stretch occupies residues Ala-290–Lys-346. Residues Ala-337–Lys-346 are compositionally biased toward basic and acidic residues.

It belongs to the proteasome subunit S5A family. As to quaternary structure, the 26S proteasome is composed of a core protease, known as the 20S proteasome, capped at one or both ends by the 19S regulatory complex (RC). The RC is composed of at least 18 different subunits in two subcomplexes, the base and the lid, which form the portions proximal and distal to the 20S proteolytic core, respectively. Broadly expressed with high expression in the pharynx, intestine, hypodermis and spermatheca and weak expression in the excretory cell, body wall muscle, vulva and somatic gonad.

It is found in the cytoplasm. It localises to the nucleus. Binds and presumably selects ubiquitin-conjugates for destruction. Required for protein degradation and ubiquitin-proteasome system (UBS) function and regulates proteasomal subunit expression. Involvement in UBS might be cell type specific. Regulator of the autophagy-lysosome pathway that may confer resistance to autophagy by regulating the expression of autophagy-related proteins such as lgg-1, and by regulating lysosome formation, possibly by modulating elt-2 activity. Required for fertility, sperm production, and sex determination through regulation of tra-2 protein. Plays a role in the elimination of paternal mitochondria in fertilized eggs. The chain is 26S proteasome non-ATPase regulatory subunit 4 from Caenorhabditis elegans.